The primary structure comprises 229 residues: PKHD-type hydroxylase BBta_1313 (229 aa).

Residues 78 to 180 (HIFPPLFNRY…RIASFFWLQS (103 aa)) enclose the Fe2OG dioxygenase domain. Fe cation contacts are provided by His98, Asp100, and His161. Arg171 contacts 2-oxoglutarate.

It depends on Fe(2+) as a cofactor. L-ascorbate is required as a cofactor.

In Bradyrhizobium sp. (strain BTAi1 / ATCC BAA-1182), this protein is PKHD-type hydroxylase BBta_1313.